Here is a 78-residue protein sequence, read N- to C-terminus: Translation initiation factor IF-1, plastid (78 aa).

One can recognise an S1-like domain in the interval 1-72 (MKKQDLIDME…TKGRITYRLR (72 aa)).

This sequence belongs to the IF-1 family. In terms of assembly, component of the 30S ribosomal translation pre-initiation complex which assembles on the 30S ribosome in the order IF-2 and IF-3, IF-1 and N-formylmethionyl-tRNA(fMet); mRNA recruitment can occur at any time during PIC assembly.

It is found in the plastid. Functionally, one of the essential components for the initiation of protein synthesis. Stabilizes the binding of IF-2 and IF-3 on the 30S subunit to which N-formylmethionyl-tRNA(fMet) subsequently binds. Helps modulate mRNA selection, yielding the 30S pre-initiation complex (PIC). Upon addition of the 50S ribosomal subunit IF-1, IF-2 and IF-3 are released leaving the mature 70S translation initiation complex. The polypeptide is Translation initiation factor IF-1, plastid (Aneura mirabilis (Parasitic liverwort)).